The chain runs to 328 residues: GTP cyclohydrolase MptA (328 aa).

It belongs to the GTP cyclohydrolase IV family. In terms of assembly, homodimer. It depends on Fe(2+) as a cofactor.

It carries out the reaction GTP + H2O = 7,8-dihydroneopterin 2',3'-cyclic phosphate + formate + diphosphate + H(+). It participates in cofactor biosynthesis; 5,6,7,8-tetrahydromethanopterin biosynthesis. Its function is as follows. Converts GTP to 7,8-dihydro-D-neopterin 2',3'-cyclic phosphate, the first intermediate in the biosynthesis of coenzyme methanopterin. The polypeptide is GTP cyclohydrolase MptA (Methanospirillum hungatei JF-1 (strain ATCC 27890 / DSM 864 / NBRC 100397 / JF-1)).